A 343-amino-acid polypeptide reads, in one-letter code: Anthranilate phosphoribosyltransferase (343 aa).

5-phospho-alpha-D-ribose 1-diphosphate is bound by residues Gly-84, 87-88, Thr-92, 94-97, 112-120, and Ser-124; these read GD, NIST, and KHGNRGVSS. Residue Gly-84 coordinates anthranilate. Ser-96 provides a ligand contact to Mg(2+). Position 115 (Asn-115) interacts with anthranilate. Position 170 (Arg-170) interacts with anthranilate. Residues Asp-229 and Glu-230 each coordinate Mg(2+).

It belongs to the anthranilate phosphoribosyltransferase family. Homodimer. Requires Mg(2+) as cofactor.

The catalysed reaction is N-(5-phospho-beta-D-ribosyl)anthranilate + diphosphate = 5-phospho-alpha-D-ribose 1-diphosphate + anthranilate. Its pathway is amino-acid biosynthesis; L-tryptophan biosynthesis; L-tryptophan from chorismate: step 2/5. Functionally, catalyzes the transfer of the phosphoribosyl group of 5-phosphorylribose-1-pyrophosphate (PRPP) to anthranilate to yield N-(5'-phosphoribosyl)-anthranilate (PRA). This Burkholderia vietnamiensis (strain G4 / LMG 22486) (Burkholderia cepacia (strain R1808)) protein is Anthranilate phosphoribosyltransferase.